A 596-amino-acid chain; its full sequence is Elongation factor 4 (596 aa).

Residues 2–183 enclose the tr-type G domain; it reads ENIRNFSIIA…AIIKRIPAPK (182 aa). GTP is bound by residues 14–19 and 130–133; these read DHGKST and NKID.

This sequence belongs to the TRAFAC class translation factor GTPase superfamily. Classic translation factor GTPase family. LepA subfamily.

The protein resides in the cell inner membrane. It carries out the reaction GTP + H2O = GDP + phosphate + H(+). Required for accurate and efficient protein synthesis under certain stress conditions. May act as a fidelity factor of the translation reaction, by catalyzing a one-codon backward translocation of tRNAs on improperly translocated ribosomes. Back-translocation proceeds from a post-translocation (POST) complex to a pre-translocation (PRE) complex, thus giving elongation factor G a second chance to translocate the tRNAs correctly. Binds to ribosomes in a GTP-dependent manner. The protein is Elongation factor 4 of Campylobacter hominis (strain ATCC BAA-381 / DSM 21671 / CCUG 45161 / LMG 19568 / NCTC 13146 / CH001A).